Reading from the N-terminus, the 211-residue chain is Protein-L-isoaspartate O-methyltransferase (211 aa).

Serine 62 is a catalytic residue.

The protein belongs to the methyltransferase superfamily. L-isoaspartyl/D-aspartyl protein methyltransferase family.

The protein resides in the cytoplasm. It carries out the reaction [protein]-L-isoaspartate + S-adenosyl-L-methionine = [protein]-L-isoaspartate alpha-methyl ester + S-adenosyl-L-homocysteine. Its function is as follows. Catalyzes the methyl esterification of L-isoaspartyl residues in peptides and proteins that result from spontaneous decomposition of normal L-aspartyl and L-asparaginyl residues. It plays a role in the repair and/or degradation of damaged proteins. In Shewanella piezotolerans (strain WP3 / JCM 13877), this protein is Protein-L-isoaspartate O-methyltransferase.